Consider the following 378-residue polypeptide: Probable pectin lyase A (378 aa).

The N-terminal stretch at 1 to 18 (MKYASFLALVGFITSTSA) is a signal peptide. Intrachain disulfides connect cysteine 81–cysteine 100 and cysteine 90–cysteine 224. Residue arginine 254 is part of the active site. A disulfide bridge connects residues cysteine 321 and cysteine 329.

Belongs to the polysaccharide lyase 1 family.

It localises to the secreted. It carries out the reaction Eliminative cleavage of (1-&gt;4)-alpha-D-galacturonan methyl ester to give oligosaccharides with 4-deoxy-6-O-methyl-alpha-D-galact-4-enuronosyl groups at their non-reducing ends.. Pectinolytic enzymes consist of four classes of enzymes: pectin lyase, polygalacturonase, pectin methylesterase and rhamnogalacturonase. Among pectinolytic enzymes, pectin lyase is the most important in depolymerization of pectin, since it cleaves internal glycosidic bonds of highly methylated pectins. This Aspergillus clavatus (strain ATCC 1007 / CBS 513.65 / DSM 816 / NCTC 3887 / NRRL 1 / QM 1276 / 107) protein is Probable pectin lyase A (pelA).